A 1263-amino-acid polypeptide reads, in one-letter code: DNA-directed RNA polymerase subunit beta (1263 aa).

Belongs to the RNA polymerase beta chain family. In terms of assembly, the RNAP catalytic core consists of 2 alpha, 1 beta, 1 beta' and 1 omega subunit. When a sigma factor is associated with the core the holoenzyme is formed, which can initiate transcription.

It catalyses the reaction RNA(n) + a ribonucleoside 5'-triphosphate = RNA(n+1) + diphosphate. Functionally, DNA-dependent RNA polymerase catalyzes the transcription of DNA into RNA using the four ribonucleoside triphosphates as substrates. The sequence is that of DNA-directed RNA polymerase subunit beta from Thermotoga maritima (strain ATCC 43589 / DSM 3109 / JCM 10099 / NBRC 100826 / MSB8).